Consider the following 328-residue polypeptide: Arylacetonitrilase (328 aa).

The 274-residue stretch at 5-278 (VRVAVTQAEP…EGIIYADLDF (274 aa)) folds into the CN hydrolase domain. The active-site Proton acceptor is the Glu45. The active site involves Lys125. Cys160 functions as the Nucleophile in the catalytic mechanism.

It belongs to the carbon-nitrogen hydrolase superfamily. Nitrilase family.

The enzyme catalyses a nitrile + 2 H2O = a carboxylate + NH4(+). It carries out the reaction 4-chlorophenylacetonitrile + 2 H2O = 4-chlorophenylacetate + NH4(+). Nitrilase that hydrolyzes preferentially phenylacetonitrile, (R,S)-mandelonitrile, and 3-indolylacetonitrile. The sequence is that of Arylacetonitrilase from Aspergillus niger (strain ATCC MYA-4892 / CBS 513.88 / FGSC A1513).